The sequence spans 175 residues: Large ribosomal subunit protein uL10 (175 aa).

The protein belongs to the universal ribosomal protein uL10 family. Part of the ribosomal stalk of the 50S ribosomal subunit. The N-terminus interacts with L11 and the large rRNA to form the base of the stalk. The C-terminus forms an elongated spine to which L12 dimers bind in a sequential fashion forming a multimeric L10(L12)X complex.

In terms of biological role, forms part of the ribosomal stalk, playing a central role in the interaction of the ribosome with GTP-bound translation factors. This is Large ribosomal subunit protein uL10 from Thermobifida fusca (strain YX).